A 272-amino-acid polypeptide reads, in one-letter code: Dermonecrotic toxin StSicTox-betaIF1 (272 aa).

The active site involves His5. Mg(2+) contacts are provided by Glu25 and Asp27. Residue His41 is the Nucleophile of the active site. Intrachain disulfides connect Cys45–Cys51 and Cys47–Cys189. Asp85 is a Mg(2+) binding site.

Belongs to the arthropod phospholipase D family. Class II subfamily. It depends on Mg(2+) as a cofactor. Expressed by the venom gland.

The protein localises to the secreted. It carries out the reaction an N-(acyl)-sphingosylphosphocholine = an N-(acyl)-sphingosyl-1,3-cyclic phosphate + choline. The enzyme catalyses an N-(acyl)-sphingosylphosphoethanolamine = an N-(acyl)-sphingosyl-1,3-cyclic phosphate + ethanolamine. The catalysed reaction is a 1-acyl-sn-glycero-3-phosphocholine = a 1-acyl-sn-glycero-2,3-cyclic phosphate + choline. It catalyses the reaction a 1-acyl-sn-glycero-3-phosphoethanolamine = a 1-acyl-sn-glycero-2,3-cyclic phosphate + ethanolamine. Its function is as follows. Dermonecrotic toxins cleave the phosphodiester linkage between the phosphate and headgroup of certain phospholipids (sphingolipid and lysolipid substrates), forming an alcohol (often choline) and a cyclic phosphate. This toxin acts on sphingomyelin (SM). It may also act on ceramide phosphoethanolamine (CPE), lysophosphatidylcholine (LPC) and lysophosphatidylethanolamine (LPE), but not on lysophosphatidylserine (LPS), and lysophosphatidylglycerol (LPG). It acts by transphosphatidylation, releasing exclusively cyclic phosphate products as second products. Induces dermonecrosis, hemolysis, increased vascular permeability, edema, inflammatory response, and platelet aggregation. This is Dermonecrotic toxin StSicTox-betaIF1 from Sicarius terrosus (Cave spider).